Here is a 345-residue protein sequence, read N- to C-terminus: N-acetyl-gamma-glutamyl-phosphate reductase (345 aa).

Residue Cys149 is part of the active site.

The protein belongs to the NAGSA dehydrogenase family. Type 1 subfamily.

The protein resides in the cytoplasm. The catalysed reaction is N-acetyl-L-glutamate 5-semialdehyde + phosphate + NADP(+) = N-acetyl-L-glutamyl 5-phosphate + NADPH + H(+). Its pathway is amino-acid biosynthesis; L-arginine biosynthesis; N(2)-acetyl-L-ornithine from L-glutamate: step 3/4. In terms of biological role, catalyzes the NADPH-dependent reduction of N-acetyl-5-glutamyl phosphate to yield N-acetyl-L-glutamate 5-semialdehyde. This Geobacillus sp. (strain WCH70) protein is N-acetyl-gamma-glutamyl-phosphate reductase.